Reading from the N-terminus, the 199-residue chain is Acireductone dioxygenase 3 (199 aa).

Positions 99, 101, 105, and 144 each coordinate Fe(2+). 4 residues coordinate Ni(2+): His99, His101, Glu105, and His144.

It belongs to the acireductone dioxygenase (ARD) family. Requires Fe(2+) as cofactor. Ni(2+) serves as cofactor.

The protein localises to the cytoplasm. It is found in the nucleus. It catalyses the reaction 1,2-dihydroxy-5-(methylsulfanyl)pent-1-en-3-one + O2 = 4-methylsulfanyl-2-oxobutanoate + formate + 2 H(+). The catalysed reaction is 1,2-dihydroxy-5-(methylsulfanyl)pent-1-en-3-one + O2 = 3-(methylsulfanyl)propanoate + CO + formate + 2 H(+). Its pathway is amino-acid biosynthesis; L-methionine biosynthesis via salvage pathway; L-methionine from S-methyl-5-thio-alpha-D-ribose 1-phosphate: step 5/6. Its function is as follows. Catalyzes 2 different reactions between oxygen and the acireductone 1,2-dihydroxy-3-keto-5-methylthiopentene (DHK-MTPene) depending upon the metal bound in the active site. Fe-containing acireductone dioxygenase (Fe-ARD) produces formate and 2-keto-4-methylthiobutyrate (KMTB), the alpha-ketoacid precursor of methionine in the methionine recycle pathway. Ni-containing acireductone dioxygenase (Ni-ARD) produces methylthiopropionate, carbon monoxide and formate, and does not lie on the methionine recycle pathway. The protein is Acireductone dioxygenase 3 (ARD3) of Arabidopsis thaliana (Mouse-ear cress).